Reading from the N-terminus, the 56-residue chain is Large ribosomal subunit protein bL33 (56 aa).

It belongs to the bacterial ribosomal protein bL33 family.

In Beutenbergia cavernae (strain ATCC BAA-8 / DSM 12333 / CCUG 43141 / JCM 11478 / NBRC 16432 / NCIMB 13614 / HKI 0122), this protein is Large ribosomal subunit protein bL33.